The primary structure comprises 304 residues: Porphobilinogen deaminase (304 aa).

An S-(dipyrrolylmethanemethyl)cysteine modification is found at C240.

The protein belongs to the HMBS family. Monomer. Requires dipyrromethane as cofactor.

It carries out the reaction 4 porphobilinogen + H2O = hydroxymethylbilane + 4 NH4(+). Its pathway is porphyrin-containing compound metabolism; protoporphyrin-IX biosynthesis; coproporphyrinogen-III from 5-aminolevulinate: step 2/4. Functionally, tetrapolymerization of the monopyrrole PBG into the hydroxymethylbilane pre-uroporphyrinogen in several discrete steps. The sequence is that of Porphobilinogen deaminase from Xanthomonas campestris pv. campestris (strain B100).